Here is a 119-residue protein sequence, read N- to C-terminus: Large ribosomal subunit protein uL18 (119 aa).

It belongs to the universal ribosomal protein uL18 family. Part of the 50S ribosomal subunit; part of the 5S rRNA/L5/L18/L25 subcomplex. Contacts the 5S and 23S rRNAs.

This is one of the proteins that bind and probably mediate the attachment of the 5S RNA into the large ribosomal subunit, where it forms part of the central protuberance. The protein is Large ribosomal subunit protein uL18 of Mesorhizobium japonicum (strain LMG 29417 / CECT 9101 / MAFF 303099) (Mesorhizobium loti (strain MAFF 303099)).